The sequence spans 462 residues: Toxin CqTX-A (462 aa).

Residues 1–19 (MANMLYFSLLALLFMTGIA) form the signal peptide. N174 is a glycosylation site (N-linked (GlcNAc...) asparagine).

It belongs to the jellyfish toxin family. Type I subfamily. Post-translationally, contains disulfide bonds. N-glycosylated.

The protein localises to the secreted. The protein resides in the nematocyst. It is found in the target cell membrane. Functionally, critical allergen and main toxic protein of C.quadrigatus venom. Has potent hemolytic activity. Is lethal to crayfish. Causes cutaneous inflammation in humans. May act as a pore-forming toxin, disrupting normal transmembrane ion concentration gradients in susceptible cells. This Chiropsoides quadrigatus (Box jellyfish) protein is Toxin CqTX-A.